The following is a 176-amino-acid chain: Nudix hydrolase 18, mitochondrial (176 aa).

The transit peptide at 1–21 directs the protein to the mitochondrion; the sequence is MVCLVSRTGRQSQRYNKGRRQ. The Nudix hydrolase domain occupies 22–153; it reads VVGCIPYRLK…WMKEALDVLV (132 aa). Positions 60-81 match the Nudix box motif; sequence GGWELDESVEEAASRESLEEAG. Mg(2+) contacts are provided by Glu-75 and Glu-79.

Belongs to the Nudix hydrolase family. Requires Mg(2+) as cofactor. It depends on Mn(2+) as a cofactor. Expressed in roots, stems and inflorescences.

The protein localises to the mitochondrion. Probably mediates the hydrolysis of some nucleoside diphosphate derivatives. The protein is Nudix hydrolase 18, mitochondrial (NUDT18) of Arabidopsis thaliana (Mouse-ear cress).